Here is a 249-residue protein sequence, read N- to C-terminus: DNA repair protein RecO (249 aa).

This sequence belongs to the RecO family.

Involved in DNA repair and RecF pathway recombination. The protein is DNA repair protein RecO of Rhodopseudomonas palustris (strain HaA2).